Reading from the N-terminus, the 194-residue chain is NADH-quinone oxidoreductase subunit B (194 aa).

The [4Fe-4S] cluster site is built by Cys-73, Cys-74, Cys-138, and Cys-168.

This sequence belongs to the complex I 20 kDa subunit family. In terms of assembly, NDH-1 is composed of 14 different subunits. Subunits NuoB, C, D, E, F, and G constitute the peripheral sector of the complex. [4Fe-4S] cluster serves as cofactor.

The protein localises to the cell inner membrane. It catalyses the reaction a quinone + NADH + 5 H(+)(in) = a quinol + NAD(+) + 4 H(+)(out). Functionally, NDH-1 shuttles electrons from NADH, via FMN and iron-sulfur (Fe-S) centers, to quinones in the respiratory chain. The immediate electron acceptor for the enzyme in this species is believed to be ubiquinone. Couples the redox reaction to proton translocation (for every two electrons transferred, four hydrogen ions are translocated across the cytoplasmic membrane), and thus conserves the redox energy in a proton gradient. The polypeptide is NADH-quinone oxidoreductase subunit B (Rhizobium johnstonii (strain DSM 114642 / LMG 32736 / 3841) (Rhizobium leguminosarum bv. viciae)).